Reading from the N-terminus, the 1905-residue chain is von Willebrand factor A domain-containing protein 8 (1905 aa).

The transit peptide at 1-45 directs the protein to the mitochondrion; sequence MQSRLLLLGAPGGLGDVASRRVRLLLRQVLRGRPGGDQQRLEVRL. The tract at residues 1–260 is interaction with PEX7; it reads MQSRLLLLGA…PLDPPLRSRF (260 aa). 446–453 contributes to the ATP binding site; the sequence is GGKGCGKT. Over residues 1541-1560 the composition is skewed to basic and acidic residues; it reads ERDSNEDVSDPKHGKEDPDN. The interval 1541-1583 is disordered; that stretch reads ERDSNEDVSDPKHGKEDPDNMPHVGGNTWAGGTGGRDTAGLGG. The span at 1568-1583 shows a compositional bias: gly residues; that stretch reads TWAGGTGGRDTAGLGG. Positions 1714-1896 constitute a VWFA domain; sequence RLRLVVDVSG…KKIPQILQQI (183 aa).

In terms of assembly, monomer. Interacts with PEX7. Interacts with PEX5 in a PEX7-dependent manner. As to expression, isoform 1 is predominantly expressed in liver, kidney, pancreas, heart, and skeletal muscle (at protein level).

It localises to the mitochondrion. In terms of biological role, exhibits ATPase activity in vitro. The polypeptide is von Willebrand factor A domain-containing protein 8 (Vwa8) (Mus musculus (Mouse)).